The following is a 252-amino-acid chain: Methylthioribulose-1-phosphate dehydratase (252 aa).

Residue cysteine 105 participates in substrate binding. Zn(2+) contacts are provided by histidine 123 and histidine 125. Catalysis depends on glutamate 151, which acts as the Proton donor/acceptor. Residue histidine 208 participates in Zn(2+) binding.

The protein belongs to the aldolase class II family. MtnB subfamily. Requires Zn(2+) as cofactor.

It is found in the cytoplasm. It carries out the reaction 5-(methylsulfanyl)-D-ribulose 1-phosphate = 5-methylsulfanyl-2,3-dioxopentyl phosphate + H2O. The protein operates within amino-acid biosynthesis; L-methionine biosynthesis via salvage pathway; L-methionine from S-methyl-5-thio-alpha-D-ribose 1-phosphate: step 2/6. In terms of biological role, catalyzes the dehydration of methylthioribulose-1-phosphate (MTRu-1-P) into 2,3-diketo-5-methylthiopentyl-1-phosphate (DK-MTP-1-P). The protein is Methylthioribulose-1-phosphate dehydratase of Sclerotinia sclerotiorum (strain ATCC 18683 / 1980 / Ss-1) (White mold).